A 226-amino-acid polypeptide reads, in one-letter code: CRISPR-associated endonuclease Cas3-HD (226 aa).

Residues glycine 9–glycine 204 enclose the HD Cas3-type domain. Mg(2+) contacts are provided by aspartate 56, histidine 74, histidine 101, and histidine 102.

This sequence belongs to the CRISPR-associated nuclease Cas3-HD family. Monomer. Can form a Cascade complex with Csa5, Cas7, Cas5a, Cas3 and Cas8a2. The cofactor is Mg(2+).

Its function is as follows. CRISPR (clustered regularly interspaced short palindromic repeat), is an adaptive immune system that provides protection against mobile genetic elements (viruses, transposable elements and conjugative plasmids). CRISPR clusters contain sequences complementary to antecedent mobile elements and target invading nucleic acids. CRISPR clusters are transcribed and processed into CRISPR RNA (crRNA). Cas3 plus Cascade participate in CRISPR interference, the third stage of CRISPR immunity. Acts as a ssDNA and ssRNA nuclease, probably with both exo- and endonuclease activities. Activity is higher for DNA than RNA. The sequence is that of CRISPR-associated endonuclease Cas3-HD (cas3') from Thermoproteus tenax (strain ATCC 35583 / DSM 2078 / JCM 9277 / NBRC 100435 / Kra 1).